The chain runs to 256 residues: Vesicle-associated protein 1-1 (256 aa).

Position 1 is an N-acetylmethionine (Met-1). Residues 1 to 232 (MSNIDLIGMS…RRESKKSQSG (232 aa)) are Cytoplasmic-facing. Ser-2 is modified (N-acetylserine; in Vesicle-associated protein 1-1, N-terminally processed). In terms of domain architecture, MSP spans 22–142 (LLTVEPLDLQ…EETKLRVTYV (121 aa)). The tract at residues 142 to 169 (VAPPRPPSPVHEGSEEGSSPRASVSDNG) is disordered. The residue at position 149 (Ser-149) is a Phosphoserine. Residues 157–169 (EGSSPRASVSDNG) are compositionally biased toward polar residues. A coiled-coil region spans residues 187 to 232 (HQENTSEARALITKLTEEKQSAIQLNNRLQRELDQLRRESKKSQSG). Residues 233–253 (GIPFMYVLLVGLIGLILGYIM) traverse the membrane as a helical; Anchor for type IV membrane protein segment.

It belongs to the VAMP-associated protein (VAP) (TC 9.B.17) family. In terms of assembly, homodimer or homooligomer. Interacts with the cowpea mosaic virus (CPMV) NTP-binding protein (NTB). Interacts with NET3C.

The protein resides in the endoplasmic reticulum membrane. It localises to the protein storage vacuole membrane. Functionally, part of a membrane-cytoskeletal adapter complex that forms a bridge between the endoplasmic reticulum and the plasma membrane. Associates with microtubules. The chain is Vesicle-associated protein 1-1 (PVA11) from Arabidopsis thaliana (Mouse-ear cress).